Here is a 332-residue protein sequence, read N- to C-terminus: Casein kinase I isoform 2 (332 aa).

Residues 11–282 (FRIGQKIGSG…YLKRLFRELF (272 aa)) form the Protein kinase domain. ATP-binding positions include 17–25 (IGSGSFGEI) and Lys-40. The Proton acceptor role is filled by Asp-133. Positions 306–332 (EGRADQQQQQQQQQQRRGSEKEDEHPV) are disordered. Over residues 311-320 (QQQQQQQQQQ) the composition is skewed to low complexity. Residues 322-332 (RGSEKEDEHPV) are compositionally biased toward basic and acidic residues.

It belongs to the protein kinase superfamily. Ser/Thr protein kinase family. Mg(2+) serves as cofactor.

The catalysed reaction is L-seryl-[protein] + ATP = O-phospho-L-seryl-[protein] + ADP + H(+). It catalyses the reaction L-threonyl-[protein] + ATP = O-phospho-L-threonyl-[protein] + ADP + H(+). Functionally, serine/threonine protein kinase. May phosphorylate ZC3H11 during unstressed conditions, leading to proteasome-dependent degradation of ZC3H11. The chain is Casein kinase I isoform 2 from Trypanosoma brucei brucei.